A 494-amino-acid polypeptide reads, in one-letter code: Protein nucleotidyltransferase YdiU (494 aa).

The ATP site is built by Gly99, Gly101, Arg102, Lys118, Asp130, Gly131, Arg181, and Arg188. The active-site Proton acceptor is the Asp261. Positions 262 and 271 each coordinate Mg(2+). Residue Asp271 participates in ATP binding.

It belongs to the SELO family. Mg(2+) is required as a cofactor. Requires Mn(2+) as cofactor.

The enzyme catalyses L-seryl-[protein] + ATP = 3-O-(5'-adenylyl)-L-seryl-[protein] + diphosphate. It catalyses the reaction L-threonyl-[protein] + ATP = 3-O-(5'-adenylyl)-L-threonyl-[protein] + diphosphate. The catalysed reaction is L-tyrosyl-[protein] + ATP = O-(5'-adenylyl)-L-tyrosyl-[protein] + diphosphate. It carries out the reaction L-histidyl-[protein] + UTP = N(tele)-(5'-uridylyl)-L-histidyl-[protein] + diphosphate. The enzyme catalyses L-seryl-[protein] + UTP = O-(5'-uridylyl)-L-seryl-[protein] + diphosphate. It catalyses the reaction L-tyrosyl-[protein] + UTP = O-(5'-uridylyl)-L-tyrosyl-[protein] + diphosphate. Functionally, nucleotidyltransferase involved in the post-translational modification of proteins. It can catalyze the addition of adenosine monophosphate (AMP) or uridine monophosphate (UMP) to a protein, resulting in modifications known as AMPylation and UMPylation. The chain is Protein nucleotidyltransferase YdiU from Variovorax paradoxus (strain S110).